The chain runs to 557 residues: Formate--tetrahydrofolate ligase (557 aa).

66–73 (TPAGEGKS) lines the ATP pocket.

Belongs to the formate--tetrahydrofolate ligase family.

It catalyses the reaction (6S)-5,6,7,8-tetrahydrofolate + formate + ATP = (6R)-10-formyltetrahydrofolate + ADP + phosphate. Its pathway is one-carbon metabolism; tetrahydrofolate interconversion. This chain is Formate--tetrahydrofolate ligase, found in Clostridium botulinum (strain ATCC 19397 / Type A).